The following is a 157-amino-acid chain: Transcription elongation factor GreA (157 aa).

A coiled-coil region spans residues 46-73; it reads AEYHSARERQSFIEGRIAELEEIISAAE.

The protein belongs to the GreA/GreB family.

Its function is as follows. Necessary for efficient RNA polymerase transcription elongation past template-encoded arresting sites. The arresting sites in DNA have the property of trapping a certain fraction of elongating RNA polymerases that pass through, resulting in locked ternary complexes. Cleavage of the nascent transcript by cleavage factors such as GreA or GreB allows the resumption of elongation from the new 3'terminus. GreA releases sequences of 2 to 3 nucleotides. The polypeptide is Transcription elongation factor GreA (Acidiphilium cryptum (strain JF-5)).